Here is a 129-residue protein sequence, read N- to C-terminus: Small ribosomal subunit protein uS11c (129 aa).

This sequence belongs to the universal ribosomal protein uS11 family. In terms of assembly, part of the 30S ribosomal subunit.

It localises to the plastid. The protein localises to the chloroplast. This is Small ribosomal subunit protein uS11c from Gracilaria tenuistipitata var. liui (Red alga).